Reading from the N-terminus, the 199-residue chain is Outer-membrane lipoprotein LolB (199 aa).

Residues Met1–Gly28 form the signal peptide. Residue Cys29 is the site of N-palmitoyl cysteine attachment. Residue Cys29 is the site of S-diacylglycerol cysteine attachment.

This sequence belongs to the LolB family. As to quaternary structure, monomer.

The protein localises to the cell outer membrane. Its function is as follows. Plays a critical role in the incorporation of lipoproteins in the outer membrane after they are released by the LolA protein. The protein is Outer-membrane lipoprotein LolB of Bordetella petrii (strain ATCC BAA-461 / DSM 12804 / CCUG 43448).